Here is a 622-residue protein sequence, read N- to C-terminus: uncharacterized protein (622 aa).

A signal peptide spans 1–20 (MKIKAVAIFLSLLMIISLFS).

This is an uncharacterized protein from Methanocaldococcus jannaschii (strain ATCC 43067 / DSM 2661 / JAL-1 / JCM 10045 / NBRC 100440) (Methanococcus jannaschii).